Consider the following 265-residue polypeptide: Thiamine thiazole synthase (265 aa).

Residues Ala43, 62–63, Gly70, Val134, and 162–164 contribute to the NAD(+) site; these read ER and HVD. Residues Asp164 and His179 each contribute to the Fe cation site. Met229 is an NAD(+) binding site. A glycine-binding site is contributed by Arg239.

Belongs to the THI4 family. As to quaternary structure, homooctamer; tetramer of dimers. It depends on Fe(2+) as a cofactor.

The catalysed reaction is hydrogen sulfide + glycine + NAD(+) = ADP-5-ethyl-4-methylthiazole-2-carboxylate + nicotinamide + 3 H2O + H(+). It participates in cofactor biosynthesis; thiamine diphosphate biosynthesis. Involved in the biosynthesis of the thiazole moiety of thiamine. Catalyzes the conversion of NAD and glycine to adenosine diphosphate 5-(2-hydroxyethyl)-4-methylthiazole-2-carboxylate (ADT), an adenylated thiazole intermediate, using free sulfide as a source of sulfur. The polypeptide is Thiamine thiazole synthase (Sulfolobus acidocaldarius (strain ATCC 33909 / DSM 639 / JCM 8929 / NBRC 15157 / NCIMB 11770)).